The primary structure comprises 378 residues: Dihydroorotate dehydrogenase (quinone) (378 aa).

FMN-binding positions include 79–83 (PGYDK) and Thr103. Lys83 serves as a coordination point for substrate. 128 to 132 (NRMGF) contacts substrate. 2 residues coordinate FMN: Asn160 and Asn193. A substrate-binding site is contributed by Asn193. Ser196 functions as the Nucleophile in the catalytic mechanism. Position 198 (Asn198) interacts with substrate. Positions 231 and 259 each coordinate FMN. 260 to 261 (NT) provides a ligand contact to substrate. Residues Gly289, Gly318, and 339–340 (YT) each bind FMN.

It belongs to the dihydroorotate dehydrogenase family. Type 2 subfamily. In terms of assembly, monomer. FMN is required as a cofactor.

Its subcellular location is the cell membrane. The catalysed reaction is (S)-dihydroorotate + a quinone = orotate + a quinol. Its pathway is pyrimidine metabolism; UMP biosynthesis via de novo pathway; orotate from (S)-dihydroorotate (quinone route): step 1/1. Its function is as follows. Catalyzes the conversion of dihydroorotate to orotate with quinone as electron acceptor. This is Dihydroorotate dehydrogenase (quinone) from Trichodesmium erythraeum (strain IMS101).